A 23-amino-acid chain; its full sequence is Hongotoxin-4 (23 aa).

Belongs to the short scorpion toxin superfamily. Potassium channel inhibitor family. Alpha-KTx 02 subfamily. In terms of tissue distribution, expressed by the venom gland.

The protein localises to the secreted. Potent selective inhibitor of Kv1/KCNA voltage-gated potassium channels. This chain is Hongotoxin-4, found in Centruroides limbatus (Bark scorpion).